Here is a 232-residue protein sequence, read N- to C-terminus: Ribosomal RNA large subunit methyltransferase E (232 aa).

Glycine 64, tryptophan 66, aspartate 97, aspartate 113, and aspartate 138 together coordinate S-adenosyl-L-methionine. Lysine 178 acts as the Proton acceptor in catalysis.

Belongs to the class I-like SAM-binding methyltransferase superfamily. RNA methyltransferase RlmE family.

Its subcellular location is the cytoplasm. The enzyme catalyses uridine(2552) in 23S rRNA + S-adenosyl-L-methionine = 2'-O-methyluridine(2552) in 23S rRNA + S-adenosyl-L-homocysteine + H(+). In terms of biological role, specifically methylates the uridine in position 2552 of 23S rRNA at the 2'-O position of the ribose in the fully assembled 50S ribosomal subunit. This Leptothrix cholodnii (strain ATCC 51168 / LMG 8142 / SP-6) (Leptothrix discophora (strain SP-6)) protein is Ribosomal RNA large subunit methyltransferase E.